Here is a 274-residue protein sequence, read N- to C-terminus: 2,3,4,5-tetrahydropyridine-2,6-dicarboxylate N-succinyltransferase (274 aa).

Substrate-binding residues include R104 and D141.

This sequence belongs to the transferase hexapeptide repeat family. Homotrimer.

The protein localises to the cytoplasm. It carries out the reaction (S)-2,3,4,5-tetrahydrodipicolinate + succinyl-CoA + H2O = (S)-2-succinylamino-6-oxoheptanedioate + CoA. The protein operates within amino-acid biosynthesis; L-lysine biosynthesis via DAP pathway; LL-2,6-diaminopimelate from (S)-tetrahydrodipicolinate (succinylase route): step 1/3. The sequence is that of 2,3,4,5-tetrahydropyridine-2,6-dicarboxylate N-succinyltransferase from Yersinia enterocolitica serotype O:8 / biotype 1B (strain NCTC 13174 / 8081).